An 810-amino-acid chain; its full sequence is Actin-regulating kinase PRK1 (810 aa).

The 277-residue stretch at 22–298 (AKIIKYLTSG…CQVLEEVSRL (277 aa)) folds into the Protein kinase domain. ATP-binding positions include 28–36 (LTSGGFAQV) and lysine 56. The active-site Proton acceptor is the aspartate 158. A phosphoserine mark is found at serine 402, serine 428, and serine 484. 2 disordered regions span residues 552-668 (FTGN…NVNI) and 733-761 (GVLDIKTKSNGKDKSRPPRPPPKPLHLRT). Threonine 553 is subject to Phosphothreonine. Residues 553–566 (TGNSVNNSRSASFD) are compositionally biased toward polar residues. Serine 556 is modified (phosphoserine). A compositionally biased stretch (low complexity) spans 567–588 (NNNVNGNGNNTNRRLVSSSTSS). Composition is skewed to basic and acidic residues over residues 594–612 (SDTKRKEESDKNQRLEKRR) and 622–639 (FDQHERNNSRTGSRDYYR). A compositionally biased stretch (low complexity) spans 645–658 (KKTQASAKTTSKPT). Basic and acidic residues predominate over residues 733–748 (GVLDIKTKSNGKDKSR). An interaction with SH3 domain of ABP1 region spans residues 743 to 756 (GKDKSRPPRPPPKP).

This sequence belongs to the protein kinase superfamily. Ser/Thr protein kinase family. In terms of assembly, interacts with ABP1, which is required for proper actin patch localization.

The protein resides in the cytoplasm. It is found in the cytoskeleton. Its subcellular location is the actin patch. The enzyme catalyses L-seryl-[protein] + ATP = O-phospho-L-seryl-[protein] + ADP + H(+). It catalyses the reaction L-threonyl-[protein] + ATP = O-phospho-L-threonyl-[protein] + ADP + H(+). Functionally, protein kinase involved in the regulation of actin cytoskeleton organization and endocytosis. Phosphorylates PAN1 which disrupts the interaction between PAN1 and END3, and between PAN1 and SLA1. Phosphorylates SCD5. Preferentially, phosphorylates substrates on threonine residues in a [L/I/V/M]-x-x-[Q/N/T/S]-x-T-G motif. The sequence is that of Actin-regulating kinase PRK1 (PRK1) from Saccharomyces cerevisiae (strain ATCC 204508 / S288c) (Baker's yeast).